Reading from the N-terminus, the 199-residue chain is MANRGPSYGLSREVQQKIEKQYDADLEQILIQWITTQCREDVGQPQPGRENFQKWLKDGTVLCKLINSLYPEGQAPVKKIQASSMAFKQMEQISQFLQAAERYGINTTDIFQTVDLWEGKNMACVQRTLMNLGGLAVARDDGLFSGDPNWFPKKSKENPRNFSDNQLQEGKNVIGLQMGTNRGASQAGMTGYGMPRQIL.

The residue at position 2 (A2) is an N-acetylalanine. Phosphoserine is present on S11. Residues K17 and K20 each carry the N6-acetyllysine modification. Residues 24–136 (ADLEQILIQW…RTLMNLGGLA (113 aa)) enclose the Calponin-homology (CH) domain. S163 bears the Phosphoserine mark. K171 participates in a covalent cross-link: Glycyl lysine isopeptide (Lys-Gly) (interchain with G-Cter in SUMO2). The stretch at 174–199 (IGLQMGTNRGASQAGMTGYGMPRQIL) is one Calponin-like repeat. Residue T180 is modified to Phosphothreonine. An omega-N-methylarginine mark is found at R182 and R196.

It belongs to the calponin family.

In Mus musculus (Mouse), this protein is Transgelin-2 (Tagln2).